Here is a 666-residue protein sequence, read N- to C-terminus: UvrABC system protein B (666 aa).

The Helicase ATP-binding domain maps to 26-183 (DSFQKGAEKV…RKLLHIQYNR (158 aa)). 39 to 46 (GVTGSGKT) is a binding site for ATP. Positions 92–115 (YYDYYQPEAYVPSSDTFIEKDSSI) match the Beta-hairpin motif. Positions 429–591 (QIEDLLVEIR…ITPLTIRKEV (163 aa)) constitute a Helicase C-terminal domain. Residues 625–660 (EVLKDKLREEMMKAAKELDFERAAILRDKMLSIQIN) enclose the UVR domain.

Belongs to the UvrB family. Forms a heterotetramer with UvrA during the search for lesions. Interacts with UvrC in an incision complex.

The protein localises to the cytoplasm. Functionally, the UvrABC repair system catalyzes the recognition and processing of DNA lesions. A damage recognition complex composed of 2 UvrA and 2 UvrB subunits scans DNA for abnormalities. Upon binding of the UvrA(2)B(2) complex to a putative damaged site, the DNA wraps around one UvrB monomer. DNA wrap is dependent on ATP binding by UvrB and probably causes local melting of the DNA helix, facilitating insertion of UvrB beta-hairpin between the DNA strands. Then UvrB probes one DNA strand for the presence of a lesion. If a lesion is found the UvrA subunits dissociate and the UvrB-DNA preincision complex is formed. This complex is subsequently bound by UvrC and the second UvrB is released. If no lesion is found, the DNA wraps around the other UvrB subunit that will check the other stand for damage. In Leptospira borgpetersenii serovar Hardjo-bovis (strain JB197), this protein is UvrABC system protein B.